A 296-amino-acid chain; its full sequence is uncharacterized protein (296 aa).

A helical membrane pass occupies residues 1–21 (MIFAVVDILEISIQLLCILLF).

It is found in the membrane. This is an uncharacterized protein from Caenorhabditis elegans.